Here is a 211-residue protein sequence, read N- to C-terminus: Transcription factor bHLH150 (211 aa).

Over residues 1 to 15 the composition is skewed to polar residues; it reads MSSEQGNGSNPSTSP. Residues 1–23 are disordered; it reads MSSEQGNGSNPSTSPEVEGTKTI. Residues 135 to 184 form the bHLH domain; sequence AIRGSGGSGRRRKLSAVGNRVRVLGGLVPGCRRTALPELLDETADYIAAL.

As to quaternary structure, homodimer. Interacts with PRE3 and ASK7. Phosphorylated by ASK7.

Its subcellular location is the nucleus. Atypical bHLH transcription factor probably unable to bind DNA. Negatively regulates brassinosteroid signaling. The polypeptide is Transcription factor bHLH150 (BHLH150) (Arabidopsis thaliana (Mouse-ear cress)).